Here is a 68-residue protein sequence, read N- to C-terminus: UPF0291 protein TTE2340 (68 aa).

Belongs to the UPF0291 family.

Its subcellular location is the cytoplasm. The polypeptide is UPF0291 protein TTE2340 (Caldanaerobacter subterraneus subsp. tengcongensis (strain DSM 15242 / JCM 11007 / NBRC 100824 / MB4) (Thermoanaerobacter tengcongensis)).